A 123-amino-acid polypeptide reads, in one-letter code: Large ribosomal subunit protein bL12 (123 aa).

The protein belongs to the bacterial ribosomal protein bL12 family. In terms of assembly, homodimer. Part of the ribosomal stalk of the 50S ribosomal subunit. Forms a multimeric L10(L12)X complex, where L10 forms an elongated spine to which 2 to 4 L12 dimers bind in a sequential fashion. Binds GTP-bound translation factors.

Forms part of the ribosomal stalk which helps the ribosome interact with GTP-bound translation factors. Is thus essential for accurate translation. This is Large ribosomal subunit protein bL12 from Neisseria meningitidis serogroup C (strain 053442).